The sequence spans 227 residues: NADH-quinone oxidoreductase subunit C (227 aa).

This sequence belongs to the complex I 30 kDa subunit family. NDH-1 is composed of 14 different subunits. Subunits NuoB, C, D, E, F, and G constitute the peripheral sector of the complex.

The protein localises to the cell inner membrane. The enzyme catalyses a quinone + NADH + 5 H(+)(in) = a quinol + NAD(+) + 4 H(+)(out). Functionally, NDH-1 shuttles electrons from NADH, via FMN and iron-sulfur (Fe-S) centers, to quinones in the respiratory chain. The immediate electron acceptor for the enzyme in this species is believed to be ubiquinone. Couples the redox reaction to proton translocation (for every two electrons transferred, four hydrogen ions are translocated across the cytoplasmic membrane), and thus conserves the redox energy in a proton gradient. This is NADH-quinone oxidoreductase subunit C from Legionella pneumophila (strain Lens).